The primary structure comprises 338 residues: Tagatose 1,6-diphosphate aldolase (338 aa).

The protein belongs to the aldolase LacD family.

It catalyses the reaction D-tagatofuranose 1,6-bisphosphate = D-glyceraldehyde 3-phosphate + dihydroxyacetone phosphate. Its pathway is carbohydrate metabolism; D-tagatose 6-phosphate degradation; D-glyceraldehyde 3-phosphate and glycerone phosphate from D-tagatose 6-phosphate: step 2/2. The polypeptide is Tagatose 1,6-diphosphate aldolase (Listeria innocua serovar 6a (strain ATCC BAA-680 / CLIP 11262)).